The chain runs to 647 residues: S-adenosyl-L-methionine-dependent tRNA 4-demethylwyosine synthase (647 aa).

The Flavodoxin-like domain maps to 50 to 198 (GKIFFISQTG…AFQDWCDGVI (149 aa)). FMN is bound by residues 56–60 (SQTGT) and 142–174 (VFGVGSRAYGESYNAVAKELSSRMIGLGGLEMI). The region spanning 316–559 (YGIESHRCME…LSLKSNGEYE (244 aa)) is the Radical SAM core domain. Cysteine 332, cysteine 336, and cysteine 339 together coordinate [4Fe-4S] cluster.

It belongs to the TYW1 family. [4Fe-4S] cluster serves as cofactor.

The catalysed reaction is N(1)-methylguanosine(37) in tRNA(Phe) + pyruvate + S-adenosyl-L-methionine = 4-demethylwyosine(37) in tRNA(Phe) + 5'-deoxyadenosine + L-methionine + CO2 + H2O. It participates in tRNA modification; wybutosine-tRNA(Phe) biosynthesis. Its function is as follows. Probable component of the wybutosine biosynthesis pathway. Wybutosine is a hyper modified guanosine with a tricyclic base found at the 3'-position adjacent to the anticodon of eukaryotic phenylalanine tRNA. Catalyzes the condensation of N-methylguanine with 2 carbon atoms from pyruvate to form the tricyclic 4-demethylwyosine, an intermediate in wybutosine biosynthesis. The polypeptide is S-adenosyl-L-methionine-dependent tRNA 4-demethylwyosine synthase (TYW1) (Arabidopsis thaliana (Mouse-ear cress)).